The chain runs to 215 residues: Protein-L-isoaspartate O-methyltransferase (215 aa).

The active site involves Ser-62.

Belongs to the methyltransferase superfamily. L-isoaspartyl/D-aspartyl protein methyltransferase family.

It is found in the cytoplasm. It carries out the reaction [protein]-L-isoaspartate + S-adenosyl-L-methionine = [protein]-L-isoaspartate alpha-methyl ester + S-adenosyl-L-homocysteine. In terms of biological role, catalyzes the methyl esterification of L-isoaspartyl residues in peptides and proteins that result from spontaneous decomposition of normal L-aspartyl and L-asparaginyl residues. It plays a role in the repair and/or degradation of damaged proteins. In Nitratidesulfovibrio vulgaris (strain DSM 19637 / Miyazaki F) (Desulfovibrio vulgaris), this protein is Protein-L-isoaspartate O-methyltransferase.